We begin with the raw amino-acid sequence, 1476 residues long: Cystic fibrosis transmembrane conductance regulator (1476 aa).

The Cytoplasmic segment spans residues 1–77 (MQKSPLEKAS…QLIHALRRCF (77 aa)). A helical membrane pass occupies residues 78-98 (FWRFLFYGILLYLGEVTKAVQ). The 285-residue stretch at 81 to 365 (FLFYGILLYL…TAVQIWYDSF (285 aa)) folds into the ABC transmembrane type-1 1 domain. Over 99–122 (PVLLGRIIASYDPENKVERSIAIY) the chain is Extracellular. The chain crosses the membrane as a helical span at residues 123–146 (LGIGLCLLFIVRTLLLHPAIFGLH). The Cytoplasmic portion of the chain corresponds to 147–195 (RIGMQMRTAMFSLIYKKTLKLSSRVLDKISIGQLVSLLSNNLNKFDEGL). The chain crosses the membrane as a helical span at residues 196–216 (ALAHFIWIAPLQVTLLMGLLW). Residues 217–222 (DLLQFS) lie on the Extracellular side of the membrane. Residues 223 to 243 (AFCGLGLLIILVIFQAILGKM) form a helical membrane-spanning segment. Over 244–298 (MVKYRDQRAAKINERLVITSEIIDNIYSVKAYCWESAMEKMIENLREVELKMTRK) the chain is Cytoplasmic. A helical membrane pass occupies residues 299–319 (AAYMRFFTSSAFFFSGFFVVF). Residues 320–339 (LSVLPYTVINGIVLRKIFTT) lie on the Extracellular side of the membrane. Residues 340-358 (ISFCIVLRMSVTRQFPTAV) form a helical membrane-spanning segment. Residues 359 to 853 (QIWYDSFGMI…YLRYFTLHKG (495 aa)) lie on the Cytoplasmic side of the membrane. Residues Trp401, 458-465 (GSTGSGKT), and Gln493 contribute to the ATP site. The ABC transporter 1 domain maps to 423–646 (SDENNVSFSH…RPDFSSKLMG (224 aa)). A lipid anchor (S-palmitoyl cysteine) is attached at Cys524. Phosphoserine occurs at positions 549 and 660. The disordered R region stretch occupies residues 654–826 (TEERRSSILT…EEINEEDLKE (173 aa)). At Ser670 the chain carries Phosphoserine; by PKA. 3 positions are modified to phosphoserine: Ser684, Ser698, and Ser710. At Thr715 the chain carries Phosphothreonine. Phosphoserine occurs at positions 732, 763, 785, 790, and 808. A helical membrane pass occupies residues 854–874 (LLLVLIWCVLVFLVEVAASLF). The region spanning 854–1153 (LLLVLIWCVL…SSIDTDSLMR (300 aa)) is the ABC transmembrane type-1 2 domain. The Extracellular segment spans residues 875-913 (VLWLLKNNPVNSGNNGTKISNSSYVVIITSTSFYYIFYI). N-linked (GlcNAc...) asparagine glycans are attached at residues Asn889 and Asn895. A discontinuously helical transmembrane segment spans residues 914 to 934 (YVGVADTLLALSLFRGLPLVH). The Cytoplasmic segment spans residues 935 to 985 (TLITASKILHRKMLHSILHAPMSTISKLKAGGILNRFSKDIAILDDFLPLT). A helical transmembrane segment spans residues 986-1006 (IFDFIQLVFIVIGAIIVVSAL). The Extracellular segment spans residues 1007-1008 (QP). A helical transmembrane segment spans residues 1009–1029 (YIFLATVPGLVVFILLRAYFL). The Cytoplasmic segment spans residues 1030-1090 (HTAQQLKQLE…TANWFMYLAT (61 aa)). A helical transmembrane segment spans residues 1091–1111 (LRWFQMRIDMIFVLFFIVVTF). The Extracellular portion of the chain corresponds to 1112 to 1125 (ISILTTGEGEGTAG). The chain crosses the membrane as a helical span at residues 1126–1146 (IILTLAMNIMSTLQWAVNSSI). Residues 1147–1476 (DTDSLMRSVS…TEEEVQETRL (330 aa)) lie on the Cytoplasmic side of the membrane. One can recognise an ABC transporter 2 domain in the interval 1208 to 1439 (VKDLTVKYMD…KSIFQQAISS (232 aa)). ATP is bound by residues Tyr1215 and 1240–1247 (GRTGSGKS). The tract at residues 1382-1476 (RVLKQAFAGC…TEEEVQETRL (95 aa)) is interaction with GORASP2. Cys1391 is lipidated: S-palmitoyl cysteine. 2 positions are modified to phosphoserine: Ser1440 and Ser1452. Positions 1446–1476 (FQGRHSSKHKPRTQITALKEETEEEVQETRL) are disordered. Acidic residues predominate over residues 1466–1476 (ETEEEVQETRL). A PDZ-binding motif is present at residues 1474–1476 (TRL).

It belongs to the ABC transporter superfamily. ABCC family. CFTR transporter (TC 3.A.1.202) subfamily. In terms of assembly, monomer; does not require oligomerization for channel activity. May form oligomers in the membrane. Interacts with SLC26A3, SLC26A6 and NHERF1. Interacts with SHANK2. Interacts with MYO6. Interacts (via C-terminus) with GOPC (via PDZ domain); this promotes CFTR internalization and thereby decreases channel activity. Interacts with SLC4A7 through NHERF1. Found in a complex with MYO5B and RAB11A. Interacts with ANO1. Interacts with SLC26A8. Interacts with AHCYL1; the interaction increases CFTR activity. Interacts with CSE1L. The core-glycosylated form interacts with GORASP2 (via PDZ GRASP-type 1 domain) in respone to ER stress. Interacts with MARCHF2; the interaction leads to CFTR ubiqtuitination and degradation. Interacts with ADGRG2. In terms of processing, N-glycosylated. Phosphorylated; cAMP treatment promotes phosphorylation and activates the channel. Dephosphorylation decreases the ATPase activity (in vitro). Phosphorylation at PKA sites activates the channel. Phosphorylation at PKC sites enhances the response to phosphorylation by PKA. Phosphorylated by AMPK; this inhibits channel activity. Post-translationally, ubiquitinated, leading to its degradation in the lysosome. Deubiquitination by USP10 in early endosomes enhances its endocytic recycling to the cell membrane. Ubiquitinated by RNF185 during ER stress. Ubiquitinated by MARCHF2. Expressed in the epididymis (at protein level). In the initial segment of the epididymis, detected on both the luminal and basolateral sides of the ducts where it is expressed in the duct columnar cells as well as in the interstitial smooth muscle cells. Expressed in sperm in the caput. In the cauda, detected along the luminal border but not continuously and is also expressed on the basolateral surface. Within the caudal lumen, detected on sperm. Isoform 1: Expressed in a variety of epithelial tissues including colon, kidney, lung, small intestine, pancreatic duct and testis. Isoform 2: Expressed only in testis. Isoform 3: Expressed only in testis.

The protein localises to the apical cell membrane. It is found in the early endosome membrane. The protein resides in the cell membrane. Its subcellular location is the recycling endosome membrane. It localises to the endoplasmic reticulum membrane. The protein localises to the nucleus. It carries out the reaction ATP + H2O + closed Cl(-) channel = ADP + phosphate + open Cl(-) channel.. The catalysed reaction is chloride(in) = chloride(out). The enzyme catalyses hydrogencarbonate(in) = hydrogencarbonate(out). It catalyses the reaction ATP + H2O = ADP + phosphate + H(+). Functionally, epithelial ion channel that plays an important role in the regulation of epithelial ion and water transport and fluid homeostasis. Mediates the transport of chloride ions across the cell membrane. Possesses an intrinsic ATPase activity and utilizes ATP to gate its channel; the passive flow of anions through the channel is gated by cycles of ATP binding and hydrolysis by the ATP-binding domains. The ion channel is also permeable to HCO(3)(-); selectivity depends on the extracellular chloride concentration. Exerts its function also by modulating the activity of other ion channels and transporters. Contributes to the regulation of the pH and the ion content of the epithelial fluid layer. Modulates the activity of the epithelial sodium channel (ENaC) complex, in part by regulating the cell surface expression of the ENaC complex. May regulate bicarbonate secretion and salvage in epithelial cells by regulating the transporter SLC4A7. Can inhibit the chloride channel activity of ANO1. Plays a role in the chloride and bicarbonate homeostasis during sperm epididymal maturation and capacitation. The sequence is that of Cystic fibrosis transmembrane conductance regulator from Mus musculus (Mouse).